We begin with the raw amino-acid sequence, 119 residues long: MKIMHTSELLKHIYDINLSYLLLAQRLILQDKASAMFRLGIDEEMATTLEALTLPQMVKLAETNQLVCHFRFDNHQTITRLTQDSRVDDLQQIHTGIMLSTRLLNEANQQDASERKRRG.

Belongs to the FlhD family. As to quaternary structure, homodimer; disulfide-linked. Forms a heterohexamer composed of two FlhC and four FlhD subunits. Each FlhC binds a FlhD dimer, forming a heterotrimer, and a hexamer assembles by dimerization of two heterotrimers.

It is found in the cytoplasm. Functions in complex with FlhC as a master transcriptional regulator that regulates transcription of several flagellar and non-flagellar operons by binding to their promoter region. Activates expression of class 2 flagellar genes, including fliA, which is a flagellum-specific sigma factor that turns on the class 3 genes. Also regulates genes whose products function in a variety of physiological pathways. The sequence is that of Flagellar transcriptional regulator FlhD from Escherichia fergusonii (strain ATCC 35469 / DSM 13698 / CCUG 18766 / IAM 14443 / JCM 21226 / LMG 7866 / NBRC 102419 / NCTC 12128 / CDC 0568-73).